We begin with the raw amino-acid sequence, 129 residues long: Small ribosomal subunit protein uS11 (129 aa).

It belongs to the universal ribosomal protein uS11 family. In terms of assembly, part of the 30S ribosomal subunit. Interacts with proteins S7 and S18. Binds to IF-3.

Located on the platform of the 30S subunit, it bridges several disparate RNA helices of the 16S rRNA. Forms part of the Shine-Dalgarno cleft in the 70S ribosome. This chain is Small ribosomal subunit protein uS11, found in Paracoccus denitrificans (strain Pd 1222).